An 82-amino-acid polypeptide reads, in one-letter code: Small ribosomal subunit protein uS17 (82 aa).

Belongs to the universal ribosomal protein uS17 family. In terms of assembly, part of the 30S ribosomal subunit.

Functionally, one of the primary rRNA binding proteins, it binds specifically to the 5'-end of 16S ribosomal RNA. This chain is Small ribosomal subunit protein uS17, found in Aeromonas hydrophila subsp. hydrophila (strain ATCC 7966 / DSM 30187 / BCRC 13018 / CCUG 14551 / JCM 1027 / KCTC 2358 / NCIMB 9240 / NCTC 8049).